We begin with the raw amino-acid sequence, 229 residues long: Transmembrane emp24 domain-containing protein 5 (229 aa).

An N-terminal signal peptide occupies residues 1–27 (MGDKIWLPFPVLLLAALPPVLLPGAAG). Residues 28–196 (FTPSLDSDFT…IQESNFDRVN (169 aa)) are Lumenal-facing. The region spanning 45–126 (RECFYQPMPL…EKVIFFELIL (82 aa)) is the GOLD domain. The chain crosses the membrane as a helical span at residues 197–217 (FWSMVNLVVMVVVSAIQVYML). The Cytoplasmic segment spans residues 218–229 (KSLFEDKRKSRT).

The protein belongs to the EMP24/GP25L family. As to quaternary structure, interacts with TMED9 and TMED10.

The protein resides in the endoplasmic reticulum membrane. It localises to the golgi apparatus. Its subcellular location is the cis-Golgi network membrane. It is found in the endoplasmic reticulum-Golgi intermediate compartment membrane. In terms of biological role, potential role in vesicular protein trafficking, mainly in the early secretory pathway. Required for the maintenance of the Golgi apparatus; involved in protein exchange between Golgi stacks during assembly. Probably not required for COPI-vesicle-mediated retrograde transport. In Pongo abelii (Sumatran orangutan), this protein is Transmembrane emp24 domain-containing protein 5 (TMED5).